A 323-amino-acid polypeptide reads, in one-letter code: Large ribosomal subunit protein uL10 (323 aa).

Positions 298–323 are disordered; the sequence is AAAAPAAAAEPEEEDDDDDFGMGALF. Residues 307-317 show a composition bias toward acidic residues; that stretch reads EPEEEDDDDDF.

This sequence belongs to the universal ribosomal protein uL10 family. P0 forms a pentameric complex by interaction with dimers of P1 and P2. Post-translationally, phosphorylated.

Its function is as follows. Ribosomal protein P0 is the functional equivalent of E.coli protein L10. The protein is Large ribosomal subunit protein uL10 of Trypanosoma cruzi.